A 212-amino-acid polypeptide reads, in one-letter code: Proteasome subunit beta type-2 (212 aa).

This sequence belongs to the peptidase T1B family. In terms of assembly, the 26S proteasome consists of a 20S proteasome core and two 19S regulatory subunits. The 20S proteasome core is composed of 28 subunits that are arranged in four stacked rings, resulting in a barrel-shaped structure. The two end rings are each formed by seven alpha subunits, and the two central rings are each formed by seven beta subunits. The catalytic chamber with the active sites is on the inside of the barrel.

The protein localises to the cytoplasm. It localises to the nucleus. Functionally, non-catalytic component of the proteasome, a multicatalytic proteinase complex which is characterized by its ability to cleave peptides with Arg, Phe, Tyr, Leu, and Glu adjacent to the leaving group at neutral or slightly basic pH. The proteasome has an ATP-dependent proteolytic activity. This is Proteasome subunit beta type-2 (PBD1) from Oryza sativa subsp. japonica (Rice).